The sequence spans 186 residues: Adenylate kinase (186 aa).

11–16 serves as a coordination point for ATP; that stretch reads GAGKGT. The segment at 31–60 is NMP; it reads STGDILRAAVKNGTAMGIEAKKYMDAGDLV. AMP-binding positions include threonine 32, arginine 37, 58–60, 86–89, and glutamine 93; these read DLV and GFPR. Residues 127-137 are LID; that stretch reads GRAIKEGRSDD. Arginine 128 lines the ATP pocket. Arginine 134 and arginine 145 together coordinate AMP. Glycine 173 is a binding site for ATP.

It belongs to the adenylate kinase family. Monomer.

It is found in the cytoplasm. The enzyme catalyses AMP + ATP = 2 ADP. The protein operates within purine metabolism; AMP biosynthesis via salvage pathway; AMP from ADP: step 1/1. Its function is as follows. Catalyzes the reversible transfer of the terminal phosphate group between ATP and AMP. Plays an important role in cellular energy homeostasis and in adenine nucleotide metabolism. This Leptospira biflexa serovar Patoc (strain Patoc 1 / Ames) protein is Adenylate kinase.